The sequence spans 402 residues: tRNA(Met) cytidine acetate ligase (402 aa).

Residues 7–20, Gly102, Asn171, and Arg196 each bind ATP; that span reads IAEY…HIHH.

It belongs to the TmcAL family.

It is found in the cytoplasm. It catalyses the reaction cytidine(34) in elongator tRNA(Met) + acetate + ATP = N(4)-acetylcytidine(34) in elongator tRNA(Met) + AMP + diphosphate. Catalyzes the formation of N(4)-acetylcytidine (ac(4)C) at the wobble position of elongator tRNA(Met), using acetate and ATP as substrates. First activates an acetate ion to form acetyladenylate (Ac-AMP) and then transfers the acetyl group to tRNA to form ac(4)C34. This chain is tRNA(Met) cytidine acetate ligase, found in Clostridium acetobutylicum (strain ATCC 824 / DSM 792 / JCM 1419 / IAM 19013 / LMG 5710 / NBRC 13948 / NRRL B-527 / VKM B-1787 / 2291 / W).